A 96-amino-acid polypeptide reads, in one-letter code: MEPYILQDEELNELVVKIPGWEIKSKQIQREFNFANFNEAFAFMTKVALICEKYNHHPNWENVYAKVIIKLNTHDLGGITNLDQTLASEINKIFDQ.

Belongs to the pterin-4-alpha-carbinolamine dehydratase family.

It catalyses the reaction (4aS,6R)-4a-hydroxy-L-erythro-5,6,7,8-tetrahydrobiopterin = (6R)-L-erythro-6,7-dihydrobiopterin + H2O. The polypeptide is Putative pterin-4-alpha-carbinolamine dehydratase (Prochlorococcus marinus (strain MIT 9215)).